A 231-amino-acid chain; its full sequence is Cytochrome c oxidase subunit 2 (231 aa).

At 1–30 the chain is on the mitochondrial intermembrane side; sequence MNNFFQGYNLLFQHSLFASYMDWFHAFNCS. Residues 31–51 form a helical membrane-spanning segment; it reads LLLGVLVFVTLLFGYLIFSTF. Residues 52–64 lie on the Mitochondrial matrix side of the membrane; that stretch reads YFKSKKIEYQFGE. A helical membrane pass occupies residues 65–85; the sequence is LLCSIFPTIILLMQMVPSLSL. Topologically, residues 86 to 231 are mitochondrial intermembrane; it reads LYYYGLMNLD…FKSWCFGTME (146 aa). Cu cation contacts are provided by His164, Cys199, Glu201, Cys203, His207, and Met210. Residue Glu201 coordinates Mg(2+).

It belongs to the cytochrome c oxidase subunit 2 family. As to quaternary structure, component of the cytochrome c oxidase (complex IV, CIV), a multisubunit enzyme composed of a catalytic core of 3 subunits and several supernumerary subunits. The complex exists as a monomer or a dimer and forms supercomplexes (SCs) in the inner mitochondrial membrane with ubiquinol-cytochrome c oxidoreductase (cytochrome b-c1 complex, complex III, CIII). Cu cation is required as a cofactor.

The protein resides in the mitochondrion inner membrane. The enzyme catalyses 4 Fe(II)-[cytochrome c] + O2 + 8 H(+)(in) = 4 Fe(III)-[cytochrome c] + 2 H2O + 4 H(+)(out). In terms of biological role, component of the cytochrome c oxidase, the last enzyme in the mitochondrial electron transport chain which drives oxidative phosphorylation. The respiratory chain contains 3 multisubunit complexes succinate dehydrogenase (complex II, CII), ubiquinol-cytochrome c oxidoreductase (cytochrome b-c1 complex, complex III, CIII) and cytochrome c oxidase (complex IV, CIV), that cooperate to transfer electrons derived from NADH and succinate to molecular oxygen, creating an electrochemical gradient over the inner membrane that drives transmembrane transport and the ATP synthase. Cytochrome c oxidase is the component of the respiratory chain that catalyzes the reduction of oxygen to water. Electrons originating from reduced cytochrome c in the intermembrane space (IMS) are transferred via the dinuclear copper A center (CU(A)) of subunit 2 and heme A of subunit 1 to the active site in subunit 1, a binuclear center (BNC) formed by heme A3 and copper B (CU(B)). The BNC reduces molecular oxygen to 2 water molecules using 4 electrons from cytochrome c in the IMS and 4 protons from the mitochondrial matrix. This is Cytochrome c oxidase subunit 2 (cox-2) from Caenorhabditis briggsae.